The sequence spans 83 residues: Sulfur carrier protein TusA (83 aa).

The active-site Cysteine persulfide intermediate is Cys-19.

It belongs to the sulfur carrier protein TusA family.

It is found in the cytoplasm. Sulfur carrier protein which probably makes part of a sulfur-relay system. The protein is Sulfur carrier protein TusA of Vibrio atlanticus (strain LGP32) (Vibrio splendidus (strain Mel32)).